The primary structure comprises 586 residues: A-type ATP synthase subunit A (586 aa).

232-239 serves as a coordination point for ATP; sequence GPFGSGKT.

This sequence belongs to the ATPase alpha/beta chains family. Has multiple subunits with at least A(3), B(3), C, D, E, F, H, I and proteolipid K(x).

The protein localises to the cell membrane. It catalyses the reaction ATP + H2O + 4 H(+)(in) = ADP + phosphate + 5 H(+)(out). In terms of biological role, component of the A-type ATP synthase that produces ATP from ADP in the presence of a proton gradient across the membrane. The A chain is the catalytic subunit. This chain is A-type ATP synthase subunit A, found in Methanococcus maripaludis (strain DSM 14266 / JCM 13030 / NBRC 101832 / S2 / LL).